Reading from the N-terminus, the 1101-residue chain is Selenocysteine insertion sequence-binding protein 2-like (1101 aa).

5 disordered regions span residues 154–206, 240–295, 320–387, 884–1010, and 1030–1101; these read LGQV…AGPD, LWKS…PDSG, QKKP…SESL, TSDG…ISVE, and TLQL…TQTT. Low complexity predominate over residues 255 to 265; it reads AESSSEQGASE. Phosphoserine is present on serine 276. The span at 327–346 shows a compositional bias: polar residues; that stretch reads KNQTFSRGGRQTEQRNNSQV. Basic and acidic residues-rich tracts occupy residues 356 to 371 and 892 to 908; these read SSERRQNLQKRPDNKH and ENEKEVSCKHSTSEKPS. Over residues 925–939 the composition is skewed to low complexity; that stretch reads ATGSTTSATSAGKST. Residues 940–950 show a composition bias toward basic and acidic residues; sequence ASDKEEVKPDD. Residues 954-964 are compositionally biased toward polar residues; it reads ASQQSTETGSL. Acidic residues predominate over residues 988–1002; it reads LEEEEDEDEEEEEDY. Positions 1030–1039 are enriched in polar residues; that stretch reads TLQLGKTLNG. The span at 1040–1057 shows a compositional bias: acidic residues; that stretch reads SEEDNVEQSGEEEAEAPE. A compositionally biased stretch (polar residues) spans 1070–1087; it reads ADQQASPGQQKSSNCSSL.

Binds SECIS (Sec insertion sequence) elements present on selenocysteine (Sec) protein mRNAs, but does not promote Sec incorporation into selenoproteins in vitro. The polypeptide is Selenocysteine insertion sequence-binding protein 2-like (SECISBP2L) (Homo sapiens (Human)).